We begin with the raw amino-acid sequence, 356 residues long: Tetraacyldisaccharide 4'-kinase (356 aa).

51 to 58 (GWGGSGKT) contacts ATP.

The protein belongs to the LpxK family.

It catalyses the reaction a lipid A disaccharide + ATP = a lipid IVA + ADP + H(+). It functions in the pathway glycolipid biosynthesis; lipid IV(A) biosynthesis; lipid IV(A) from (3R)-3-hydroxytetradecanoyl-[acyl-carrier-protein] and UDP-N-acetyl-alpha-D-glucosamine: step 6/6. Transfers the gamma-phosphate of ATP to the 4'-position of a tetraacyldisaccharide 1-phosphate intermediate (termed DS-1-P) to form tetraacyldisaccharide 1,4'-bis-phosphate (lipid IVA). This is Tetraacyldisaccharide 4'-kinase from Oleidesulfovibrio alaskensis (strain ATCC BAA-1058 / DSM 17464 / G20) (Desulfovibrio alaskensis).